We begin with the raw amino-acid sequence, 372 residues long: UDP-N-acetylenolpyruvoylglucosamine reductase (372 aa).

An FAD-binding PCMH-type domain is found at 29 to 205 (VGPTARRLIT…LEVEFALDAS (177 aa)). Residue R177 is part of the active site. The active-site Proton donor is the S260. Residue E364 is part of the active site.

This sequence belongs to the MurB family. It depends on FAD as a cofactor.

It localises to the cytoplasm. It catalyses the reaction UDP-N-acetyl-alpha-D-muramate + NADP(+) = UDP-N-acetyl-3-O-(1-carboxyvinyl)-alpha-D-glucosamine + NADPH + H(+). It participates in cell wall biogenesis; peptidoglycan biosynthesis. Its function is as follows. Cell wall formation. This Mycobacterium avium (strain 104) protein is UDP-N-acetylenolpyruvoylglucosamine reductase.